Here is a 61-residue protein sequence, read N- to C-terminus: Small ribosomal subunit protein uS14 (61 aa).

Residues Cys-24, Cys-27, Cys-40, and Cys-43 each coordinate Zn(2+).

This sequence belongs to the universal ribosomal protein uS14 family. Zinc-binding uS14 subfamily. Part of the 30S ribosomal subunit. Contacts proteins S3 and S10. Zn(2+) is required as a cofactor.

In terms of biological role, binds 16S rRNA, required for the assembly of 30S particles and may also be responsible for determining the conformation of the 16S rRNA at the A site. This Anaeromyxobacter dehalogenans (strain 2CP-1 / ATCC BAA-258) protein is Small ribosomal subunit protein uS14.